Consider the following 391-residue polypeptide: 3-ketoacyl-CoA thiolase (391 aa).

The Acyl-thioester intermediate role is filled by Cys-95. Catalysis depends on proton acceptor residues His-347 and Cys-377.

Belongs to the thiolase-like superfamily. Thiolase family. In terms of assembly, heterotetramer of two alpha chains (FadB) and two beta chains (FadA).

The protein localises to the cytoplasm. It carries out the reaction an acyl-CoA + acetyl-CoA = a 3-oxoacyl-CoA + CoA. Its pathway is lipid metabolism; fatty acid beta-oxidation. Catalyzes the final step of fatty acid oxidation in which acetyl-CoA is released and the CoA ester of a fatty acid two carbons shorter is formed. This is 3-ketoacyl-CoA thiolase from Pseudomonas aeruginosa (strain ATCC 15692 / DSM 22644 / CIP 104116 / JCM 14847 / LMG 12228 / 1C / PRS 101 / PAO1).